The chain runs to 875 residues: Alanine--tRNA ligase (875 aa).

Residues histidine 563, histidine 567, cysteine 665, and histidine 669 each contribute to the Zn(2+) site.

Belongs to the class-II aminoacyl-tRNA synthetase family. Zn(2+) is required as a cofactor.

Its subcellular location is the cytoplasm. It carries out the reaction tRNA(Ala) + L-alanine + ATP = L-alanyl-tRNA(Ala) + AMP + diphosphate. Functionally, catalyzes the attachment of alanine to tRNA(Ala) in a two-step reaction: alanine is first activated by ATP to form Ala-AMP and then transferred to the acceptor end of tRNA(Ala). Also edits incorrectly charged Ser-tRNA(Ala) and Gly-tRNA(Ala) via its editing domain. The polypeptide is Alanine--tRNA ligase (Shewanella pealeana (strain ATCC 700345 / ANG-SQ1)).